The following is a 208-amino-acid chain: Small ribosomal subunit protein uS4 (208 aa).

The S4 RNA-binding domain maps to 98 to 161 (TRLDNTVYRL…RKIPVIAEAQ (64 aa)).

Belongs to the universal ribosomal protein uS4 family. In terms of assembly, part of the 30S ribosomal subunit. Contacts protein S5. The interaction surface between S4 and S5 is involved in control of translational fidelity.

One of the primary rRNA binding proteins, it binds directly to 16S rRNA where it nucleates assembly of the body of the 30S subunit. Functionally, with S5 and S12 plays an important role in translational accuracy. The sequence is that of Small ribosomal subunit protein uS4 from Maridesulfovibrio salexigens (strain ATCC 14822 / DSM 2638 / NCIMB 8403 / VKM B-1763) (Desulfovibrio salexigens).